The sequence spans 79 residues: UPF0180 protein BCAH187_A1552 (79 aa).

This sequence belongs to the UPF0180 family.

This Bacillus cereus (strain AH187) protein is UPF0180 protein BCAH187_A1552.